The sequence spans 252 residues: Short-chain dehydrogenase/reductase eriH (252 aa).

NADP(+)-binding residues include isoleucine 16, aspartate 65, asparagine 92, lysine 125, tyrosine 158, lysine 162, valine 191, and threonine 193. Tyrosine 158 (proton acceptor) is an active-site residue. Residue tyrosine 158 is the Proton donor of the active site. Lysine 162 acts as the Lowers pKa of active site Tyr in catalysis.

This sequence belongs to the short-chain dehydrogenases/reductases (SDR) family.

It catalyses the reaction cyathadiol + reduced [NADPH--hemoprotein reductase] + O2 = cyathatriol + oxidized [NADPH--hemoprotein reductase] + H2O + H(+). The catalysed reaction is 11-O-acetylcyathatriol + A = 11-O-acetylcyathin A3 + AH2. It carries out the reaction cyathatriol + A = cyathin A3 + AH2. It functions in the pathway secondary metabolite biosynthesis. In terms of biological role, short-chain dehydrogenase/reductase; part of the gene cluster that mediates the biosynthesis of erinacines, cyathane-xylosides that show unique biological activities, including leishmanicidal activity, stimulating activity for nerve growth-factor synthesis, and agonistic activity toward the kappa opioid receptor. Within the pathway, eriH works with eriA to catalyze C-11 hydroxylation of cyathadiol to produce cyathatriol. EriH also catalyzes oxidation of 11-O-acetyl-cyathatriol into 1-O-acetylcyathin A3. In the absence of eriL and eriJ, the SDR eriH is able to convert cyathatriol to cyathin A3; this is likely a switching mechanism in the biosynthesis of cyathins (C-14 ketogroup)and erinacines (C-14 glycosylated group). The first step of the erinacines biosynthesis pathway is catalyzed by the geranylgeranyl diphosphate (GGPP) synthase eriE via conversion of farnesyl pyrophosphate and isopentyl pyrophosphate into geranylgeranyl pyrophosphate (GGPP). GGPP is then substrate of the diterpene cyclase eriG for the production of cyatha-3,12-diene. The cytochrome P450 monooxygenase eriI then hydroxylates cyatha-3,12-diene at C-14 of the seven-membered ring to produce erinacol, which is further hydroxylated at C-15 by the cytochrome P450 monooxygenase eriC to yield cyathadiol. The cytochrome P450 monooxygenase eriA then catalyzes C-11 hydroxylation in the presence of the short chain dehydrogenase/reductase (SDR) eriH, which leads to the production of cyathatriol. The acetyltransferase eriL converts cyathatriol into 11-O-acetyl-cyathatriol. The SDR eriH catalyzes further oxidation of 11-O-acetyl-cyathatriol into 1-O-acetylcyathin A3. Finally, the glycosyl transferase eriJ tranfers xylose from UDP-xylose onto C-14 of 11-O-acetyl-cyathatriol to form eracine Q. EriJ is also able to convert 11-O-acetyl-cyathatriol to eracine Q2 by using UDP-D-glucose as cosubstrate, but at a lower rate. This chain is Short-chain dehydrogenase/reductase eriH, found in Hericium erinaceus (Lion's mane mushroom).